Consider the following 516-residue polypeptide: tRNA-2-methylthio-N(6)-dimethylallyladenosine synthase (516 aa).

In terms of domain architecture, MTTase N-terminal spans 17-133 (RSFEVRTFGC…LPSLLSRSEH (117 aa)). [4Fe-4S] cluster contacts are provided by cysteine 26, cysteine 62, cysteine 96, cysteine 170, cysteine 174, and cysteine 177. The Radical SAM core domain occupies 156–392 (RESAYAGWVS…LALQERISTE (237 aa)). In terms of domain architecture, TRAM spans 395 to 466 (AKLIGTEVEL…PFFLIADSGV (72 aa)). Disordered regions lie at residues 409–438 (SGGRKNDKTQRMTGRSRDGRLVHFDPQGHV) and 492–516 (GLGLPSIGSPAQKRSETSKSSGCGC). Positions 412–438 (RKNDKTQRMTGRSRDGRLVHFDPQGHV) are enriched in basic and acidic residues.

Belongs to the methylthiotransferase family. MiaB subfamily. Monomer. [4Fe-4S] cluster is required as a cofactor.

The protein localises to the cytoplasm. The catalysed reaction is N(6)-dimethylallyladenosine(37) in tRNA + (sulfur carrier)-SH + AH2 + 2 S-adenosyl-L-methionine = 2-methylsulfanyl-N(6)-dimethylallyladenosine(37) in tRNA + (sulfur carrier)-H + 5'-deoxyadenosine + L-methionine + A + S-adenosyl-L-homocysteine + 2 H(+). Catalyzes the methylthiolation of N6-(dimethylallyl)adenosine (i(6)A), leading to the formation of 2-methylthio-N6-(dimethylallyl)adenosine (ms(2)i(6)A) at position 37 in tRNAs that read codons beginning with uridine. This is tRNA-2-methylthio-N(6)-dimethylallyladenosine synthase from Corynebacterium diphtheriae (strain ATCC 700971 / NCTC 13129 / Biotype gravis).